A 977-amino-acid polypeptide reads, in one-letter code: Serine/threonine-protein kinase/endoribonuclease IRE1 (977 aa).

The first 20 residues, 1 to 20 (MPARWLLLLLALLLPPPGPG), serve as a signal peptide directing secretion. The Lumenal portion of the chain corresponds to 21–445 (SFGRTSTVTL…EAPVDSMLKD (425 aa)). N-linked (GlcNAc...) asparagine glycosylation occurs at N178. The chain crosses the membrane as a helical span at residues 446–466 (MATIILSTFLLVGWVAFIITY). At 467–977 (PLSVHQQRQL…PQPPVIPYAL (511 aa)) the chain is on the cytoplasmic side. The disordered stretch occupies residues 498 to 559 (FHPHGDLTQD…PSLEQDDEDE (62 aa)). The span at 513–551 (SSGPFSESSGTSSPSPSPRASNHSLHPSSSASRAGTSPS) shows a compositional bias: low complexity. Residues 571–832 (FCPKDVLGHG…AKHVLKHPFF (262 aa)) form the Protein kinase domain. Residues 577–585 (LGHGAEGTI), K599, and 643–645 (ELC) contribute to the ATP site. D688 acts as the Proton acceptor; for protein kinase activity in catalysis. Residues 690–693 (KPHN) and D711 each bind ATP. 2 positions are modified to phosphoserine: S724 and S729. The KEN domain maps to 835–963 (LEKQLQFFQD…ERLFQTYYWH (129 aa)). The interval 906-907 (NK) is interacts with hydroxy-aryl-aldehyde inhibitors.

It belongs to the protein kinase superfamily. Ser/Thr protein kinase family. As to quaternary structure, monomer. Homodimer; disulfide-linked; homodimerization takes place in response to endoplasmic reticulum stress and promotes activation of the kinase and endoribonuclease activities. Dimer formation is driven by hydrophobic interactions within the N-terminal luminal domains and stabilized by disulfide bridges. Interacts (via the luminal region) with DNAJB9/ERdj4; interaction takes place in unstressed cells and promotes recruitment of HSPA5/BiP. Interacts (via the luminal region) with HSPA5/BiP; HSPA5/BiP is a negative regulator of the unfolded protein response (UPR) that prevents homodimerization of ERN1/IRE1 and subsequent activation of the protein. Interaction with HSPA5 also competitively inhibits ERN1 interaction with MANF. Interacts with PDIA6, a negative regulator of the UPR; the interaction is direct and disrupts homodimerization. Interacts with DAB2IP (via PH domain); the interaction occurs in a endoplasmic reticulum stress-induced dependent manner and is required for subsequent recruitment of TRAF2 to ERN1/IRE1. Interacts with TAOK3 and TRAF2. Interacts with RNF13. Interacts with LACC1. Interacts (when unphosphorylated) with DDRGK1; interaction is dependent on UFM1 and takes place in response to endoplasmic reticulum stress, regulating ERN1/IRE1-alpha stability. Interacts (via N-terminus) with P4HB/PDIA1; the interaction is enhanced by phosphorylation of P4HB by FAM20C in response to endoplasmic reticulum stress and results in attenuation of ERN1 activity. Interacts with TMBIM6; this interaction inhibits ERN1 activity. Interacts (via luminal domain) with MANF (via C-terminus); the interaction is decreased in the presence of increasing concentrations of Ca(2+). Requires Mg(2+) as cofactor. Post-translationally, autophosphorylated following homodimerization. Autophosphorylation promotes activation of the endoribonuclease domain. In response to ER stress, phosphorylated at Ser-724, Ser-729 and possibly Ser-726; phosphorylation promotes oligomerization and endoribonuclease activity. Dephosphorylated at Ser-724, Ser-729 and possibly Ser-726 by RPAP2 to abort failed ER-stress adaptation and trigger apoptosis. Phosphorylated at Ser-724; in response to the ER stressor tunicamycin. In terms of processing, ADP-ribosylated by PARP16 upon ER stress, which increases both kinase and endonuclease activities. Expressed in liver (at protein level). Ubiquitously expressed. High levels in thymus, liver and lung. In the brain, preferentially expressed in cortical, hippocampal and olfactory neurons.

The protein resides in the endoplasmic reticulum membrane. The enzyme catalyses L-seryl-[protein] + ATP = O-phospho-L-seryl-[protein] + ADP + H(+). It catalyses the reaction L-threonyl-[protein] + ATP = O-phospho-L-threonyl-[protein] + ADP + H(+). With respect to regulation, the kinase domain is activated by trans-autophosphorylation following homodimerization. Kinase activity is required for activation of the endoribonuclease domain. Endoribonuclease activity is specifically inhibited by hydroxy-aryl-aldehydes (HAA) MKC9989, OICR464 and OICR573. In terms of biological role, serine/threonine-protein kinase and endoribonuclease that acts as a key sensor for the endoplasmic reticulum unfolded protein response (UPR). In unstressed cells, the endoplasmic reticulum luminal domain is maintained in its inactive monomeric state by binding to the endoplasmic reticulum chaperone HSPA5/BiP. Accumulation of misfolded protein in the endoplasmic reticulum causes release of HSPA5/BiP, allowing the luminal domain to homodimerize, promoting autophosphorylation of the kinase domain and subsequent activation of the endoribonuclease activity. The endoribonuclease activity is specific for XBP1 mRNA and excises 26 nucleotides from XBP1 mRNA. The resulting spliced transcript of XBP1 encodes a transcriptional activator protein that up-regulates expression of UPR target genes. Acts as an upstream signal for ER stress-induced GORASP2-mediated unconventional (ER/Golgi-independent) trafficking of CFTR to cell membrane by modulating the expression and localization of SEC16A. This Mus musculus (Mouse) protein is Serine/threonine-protein kinase/endoribonuclease IRE1.